A 121-amino-acid chain; its full sequence is Large ribosomal subunit protein bL12 (121 aa).

This sequence belongs to the bacterial ribosomal protein bL12 family. Homodimer. Part of the ribosomal stalk of the 50S ribosomal subunit. Forms a multimeric L10(L12)X complex, where L10 forms an elongated spine to which 2 to 4 L12 dimers bind in a sequential fashion. Binds GTP-bound translation factors.

In terms of biological role, forms part of the ribosomal stalk which helps the ribosome interact with GTP-bound translation factors. Is thus essential for accurate translation. The protein is Large ribosomal subunit protein bL12 of Enterobacter sp. (strain 638).